The following is a 70-amino-acid chain: Large ribosomal subunit protein eL38 (70 aa).

It belongs to the eukaryotic ribosomal protein eL38 family.

This Aedes aegypti (Yellowfever mosquito) protein is Large ribosomal subunit protein eL38 (RpL38).